A 259-amino-acid chain; its full sequence is Ribonuclease PH (259 aa).

Phosphate contacts are provided by residues arginine 88 and 126–128; that span reads GTR.

This sequence belongs to the RNase PH family. Homohexameric ring arranged as a trimer of dimers.

It carries out the reaction tRNA(n+1) + phosphate = tRNA(n) + a ribonucleoside 5'-diphosphate. In terms of biological role, phosphorolytic 3'-5' exoribonuclease that plays an important role in tRNA 3'-end maturation. Removes nucleotide residues following the 3'-CCA terminus of tRNAs; can also add nucleotides to the ends of RNA molecules by using nucleoside diphosphates as substrates, but this may not be physiologically important. Probably plays a role in initiation of 16S rRNA degradation (leading to ribosome degradation) during starvation. The polypeptide is Ribonuclease PH (Mycobacterium ulcerans (strain Agy99)).